The following is a 162-amino-acid chain: 3-hydroxyacyl-[acyl-carrier-protein] dehydratase FabZ (162 aa).

H49 is a catalytic residue.

Belongs to the thioester dehydratase family. FabZ subfamily.

Its subcellular location is the cytoplasm. It carries out the reaction a (3R)-hydroxyacyl-[ACP] = a (2E)-enoyl-[ACP] + H2O. Involved in unsaturated fatty acids biosynthesis. Catalyzes the dehydration of short chain beta-hydroxyacyl-ACPs and long chain saturated and unsaturated beta-hydroxyacyl-ACPs. In Solibacter usitatus (strain Ellin6076), this protein is 3-hydroxyacyl-[acyl-carrier-protein] dehydratase FabZ.